The chain runs to 984 residues: uncharacterized protein (984 aa).

Positions 941-984 (FGPSGPGPNQGPGDDYNNFKSTKYPRNGYNKYQPNNRIHSRNRY) are disordered.

It is found in the virion. This is an uncharacterized protein from Acanthamoeba polyphaga (Amoeba).